The following is a 465-amino-acid chain: Type II restriction enzyme BsuMI component YdjA (465 aa).

In terms of assembly, bsuMI restriction activity requires YdiR, YdiS and YdjA.

The enzyme catalyses Endonucleolytic cleavage of DNA to give specific double-stranded fragments with terminal 5'-phosphates.. Functionally, a P subtype restriction enzyme that recognizes the double-stranded sequence 5'-CTCGAG-3'; the cleavage site is unknown. This chain is Type II restriction enzyme BsuMI component YdjA (ydjA), found in Bacillus subtilis (strain 168).